The primary structure comprises 543 residues: Chaperonin GroEL (543 aa).

ATP is bound by residues 29 to 32 (TLGP), 86 to 90 (DGTTT), Gly-413, 476 to 478 (NAA), and Asp-492.

Belongs to the chaperonin (HSP60) family. Forms a cylinder of 14 subunits composed of two heptameric rings stacked back-to-back. Interacts with the co-chaperonin GroES.

The protein localises to the cytoplasm. The catalysed reaction is ATP + H2O + a folded polypeptide = ADP + phosphate + an unfolded polypeptide.. Functionally, together with its co-chaperonin GroES, plays an essential role in assisting protein folding. The GroEL-GroES system forms a nano-cage that allows encapsulation of the non-native substrate proteins and provides a physical environment optimized to promote and accelerate protein folding. This chain is Chaperonin GroEL, found in Streptococcus pyogenes serotype M5 (strain Manfredo).